Reading from the N-terminus, the 555-residue chain is Dihydroxy-acid dehydratase (555 aa).

Cys-46 is a binding site for [2Fe-2S] cluster. A Mg(2+)-binding site is contributed by Asp-78. Cys-119 provides a ligand contact to [2Fe-2S] cluster. Mg(2+) is bound by residues Asp-120 and Lys-121. The residue at position 121 (Lys-121) is an N6-carboxylysine. Cys-191 serves as a coordination point for [2Fe-2S] cluster. Glu-442 contacts Mg(2+). The Proton acceptor role is filled by Ser-468.

It belongs to the IlvD/Edd family. Homodimer. [2Fe-2S] cluster serves as cofactor. Requires Mg(2+) as cofactor.

The enzyme catalyses (2R)-2,3-dihydroxy-3-methylbutanoate = 3-methyl-2-oxobutanoate + H2O. It catalyses the reaction (2R,3R)-2,3-dihydroxy-3-methylpentanoate = (S)-3-methyl-2-oxopentanoate + H2O. The protein operates within amino-acid biosynthesis; L-isoleucine biosynthesis; L-isoleucine from 2-oxobutanoate: step 3/4. Its pathway is amino-acid biosynthesis; L-valine biosynthesis; L-valine from pyruvate: step 3/4. Functionally, functions in the biosynthesis of branched-chain amino acids. Catalyzes the dehydration of (2R,3R)-2,3-dihydroxy-3-methylpentanoate (2,3-dihydroxy-3-methylvalerate) into 2-oxo-3-methylpentanoate (2-oxo-3-methylvalerate) and of (2R)-2,3-dihydroxy-3-methylbutanoate (2,3-dihydroxyisovalerate) into 2-oxo-3-methylbutanoate (2-oxoisovalerate), the penultimate precursor to L-isoleucine and L-valine, respectively. The sequence is that of Dihydroxy-acid dehydratase from Thermus thermophilus (strain ATCC BAA-163 / DSM 7039 / HB27).